We begin with the raw amino-acid sequence, 329 residues long: 4-hydroxythreonine-4-phosphate dehydrogenase (329 aa).

The substrate site is built by His-136 and Thr-137. Positions 166, 211, and 266 each coordinate a divalent metal cation. 3 residues coordinate substrate: Lys-274, Asn-283, and Arg-292.

Belongs to the PdxA family. Homodimer. Requires Zn(2+) as cofactor. It depends on Mg(2+) as a cofactor. Co(2+) serves as cofactor.

It is found in the cytoplasm. The enzyme catalyses 4-(phosphooxy)-L-threonine + NAD(+) = 3-amino-2-oxopropyl phosphate + CO2 + NADH. Its pathway is cofactor biosynthesis; pyridoxine 5'-phosphate biosynthesis; pyridoxine 5'-phosphate from D-erythrose 4-phosphate: step 4/5. Functionally, catalyzes the NAD(P)-dependent oxidation of 4-(phosphooxy)-L-threonine (HTP) into 2-amino-3-oxo-4-(phosphooxy)butyric acid which spontaneously decarboxylates to form 3-amino-2-oxopropyl phosphate (AHAP). In Escherichia coli O7:K1 (strain IAI39 / ExPEC), this protein is 4-hydroxythreonine-4-phosphate dehydrogenase.